Consider the following 420-residue polypeptide: Proteinase-activated receptor 1 (420 aa).

Positions 1-20 (MMELRVLLLLLLLTLLGAMG) are cleaved as a signal peptide. Residues 21–42 (SLCLANSDTQAKGAHSNNMTIK) constitute a propeptide, removed for receptor activation. The N-linked (GlcNAc...) asparagine glycan is linked to asparagine 38. The Extracellular portion of the chain corresponds to 43 to 101 (TFRIFDDSESEFEEIPWDELDESGEGSGDQAPVSRSARKPIRRNITKEAEQYLSSQWLT). The tract at residues 61-80 (ELDESGEGSGDQAPVSRSAR) is disordered. A glycan (N-linked (GlcNAc...) asparagine) is linked at asparagine 86. A helical transmembrane segment spans residues 102-127 (KFVPSLYTVVFIVGLPLNLLAIIIFL). Topologically, residues 128–136 (FKMKVRKPA) are cytoplasmic. A helical membrane pass occupies residues 137–156 (VVYMLNLAIADVFFVSVLPF). The Extracellular portion of the chain corresponds to 157 to 175 (KIAYHLSGNDWLFGPGMCR). Cysteine 174 and cysteine 253 are disulfide-bonded. A helical transmembrane segment spans residues 176–197 (IVTAIFYCNMYCSVLLIASISV). Topologically, residues 198 to 217 (DRFLAVVYPMHSLSWRTMSR) are cytoplasmic. A helical transmembrane segment spans residues 218–238 (AYMACSFIWLISIASTIPLLV). The Extracellular segment spans residues 239–267 (TEQTQKIPRLDITTCHDVLDLKDLKDFYI). Residues 268 to 287 (YYFSSFCLLFFFVPFIITTI) form a helical membrane-spanning segment. Residues 288–310 (CYIGIIRSLSSSSIENSCKKTRA) lie on the Cytoplasmic side of the membrane. A helical membrane pass occupies residues 311–333 (LFLAVVVLCVFIICFGPTNVLFL). Topologically, residues 334–345 (THYLQEANEFLY) are extracellular. A helical membrane pass occupies residues 346–369 (FAYILSACVGSVSCCLDPLIYYYA). Over 370-420 (SSQCQRYLYSLLCCRKVSEPGSSTGQLMSTAMKNDNCSTNAKSSIYKKLLA) the chain is Cytoplasmic.

It belongs to the G-protein coupled receptor 1 family. In terms of processing, proteolytic cleavage generates a new N-terminus that functions as a tethered ligand.

The protein resides in the cell membrane. In terms of biological role, high affinity receptor that binds the activated thrombin, leading to calcium release from intracellular stores. The thrombin-activated receptor signaling pathway is mediated through PTX-insensitive G proteins, activation of phospholipase C resulting in the production of 1D-myo-inositol 1,4,5-trisphosphate (InsP3) which binds to InsP3 receptors causing calcium release from the stores. The polypeptide is Proteinase-activated receptor 1 (Xenopus laevis (African clawed frog)).